Consider the following 348-residue polypeptide: Protein RecA (348 aa).

65–72 serves as a coordination point for ATP; the sequence is GPESSGKT.

Belongs to the RecA family.

The protein localises to the cytoplasm. Functionally, can catalyze the hydrolysis of ATP in the presence of single-stranded DNA, the ATP-dependent uptake of single-stranded DNA by duplex DNA, and the ATP-dependent hybridization of homologous single-stranded DNAs. It interacts with LexA causing its activation and leading to its autocatalytic cleavage. This chain is Protein RecA, found in Vibrio natriegens.